The primary structure comprises 310 residues: p-hydroxybenzoic acid efflux pump subunit AaeA (310 aa).

Residues 12–32 traverse the membrane as a helical segment; it reads AITLVLVILAFIAIFRAWVYY.

This sequence belongs to the membrane fusion protein (MFP) (TC 8.A.1) family.

The protein localises to the cell inner membrane. Its function is as follows. Forms an efflux pump with AaeB. The chain is p-hydroxybenzoic acid efflux pump subunit AaeA from Salmonella heidelberg (strain SL476).